We begin with the raw amino-acid sequence, 396 residues long: Phosphopentomutase (396 aa).

The Mn(2+) site is built by Asp-13, Asp-288, His-293, Asp-329, His-330, and His-341.

The protein belongs to the phosphopentomutase family. It depends on Mn(2+) as a cofactor.

Its subcellular location is the cytoplasm. It catalyses the reaction 2-deoxy-alpha-D-ribose 1-phosphate = 2-deoxy-D-ribose 5-phosphate. It carries out the reaction alpha-D-ribose 1-phosphate = D-ribose 5-phosphate. It participates in carbohydrate degradation; 2-deoxy-D-ribose 1-phosphate degradation; D-glyceraldehyde 3-phosphate and acetaldehyde from 2-deoxy-alpha-D-ribose 1-phosphate: step 1/2. In terms of biological role, isomerase that catalyzes the conversion of deoxy-ribose 1-phosphate (dRib-1-P) and ribose 1-phosphate (Rib-1-P) to deoxy-ribose 5-phosphate (dRib-5-P) and ribose 5-phosphate (Rib-5-P), respectively. In Clostridium beijerinckii (strain ATCC 51743 / NCIMB 8052) (Clostridium acetobutylicum), this protein is Phosphopentomutase.